We begin with the raw amino-acid sequence, 418 residues long: Sialidase-3 (418 aa).

The FRIP motif signature appears at 24-27; it reads YRIP. Residues R25 and R45 each coordinate substrate. D50 functions as the Proton acceptor in the catalytic mechanism. The BNR 1 repeat unit spans residues 129–140; the sequence is LCSEDAGCSWGE. Residues Y179 and Y181 each contribute to the substrate site. The BNR 2 repeat unit spans residues 203–214; sequence SDDFGVTWHHGK. Substrate-binding residues include E223 and R243. The BNR 3 repeat unit spans residues 254–265; the sequence is STDSGGCFQKPT. S312 is subject to Phosphoserine. R339 contributes to the substrate binding site. Y369 functions as the Nucleophile in the catalytic mechanism. The active site involves E386.

The protein belongs to the glycosyl hydrolase 33 family. Interacts with CAV1; this interaction enhances NEU3 sialidase activity within caveola. Interacts with EGFR; this interaction mediates desialylation of EGFR and enhances downstream signaling. In terms of processing, palmitoylated; may regulate intracellular trafficking and anchorage to plasma membrane and endomembranes. As to expression, expressed in heart, brain and cerebral cortex.

It localises to the cell membrane. It is found in the membrane. Its subcellular location is the caveola. The protein resides in the early endosome membrane. The protein localises to the recycling endosome membrane. It localises to the lysosome membrane. The catalysed reaction is Hydrolysis of alpha-(2-&gt;3)-, alpha-(2-&gt;6)-, alpha-(2-&gt;8)- glycosidic linkages of terminal sialic acid residues in oligosaccharides, glycoproteins, glycolipids, colominic acid and synthetic substrates.. It carries out the reaction a ganglioside GD1a + H2O = a ganglioside GM1 + N-acetylneuraminate. It catalyses the reaction a ganglioside GD1a (d18:1(4E)) + H2O = a ganglioside GM1 (d18:1(4E)) + N-acetylneuraminate. The enzyme catalyses a ganglioside GD1b + H2O = a ganglioside GM1 + N-acetylneuraminate. The catalysed reaction is a ganglioside GD1b (d18:1(4E)) + H2O = a ganglioside GM1 (d18:1(4E)) + N-acetylneuraminate. It carries out the reaction a ganglioside GD3 + H2O = a ganglioside GM3 + N-acetylneuraminate. It catalyses the reaction a ganglioside GD3 (d18:1(4E)) + H2O = a ganglioside GM3 (d18:1(4E)) + N-acetylneuraminate. The enzyme catalyses a ganglioside GM3 + H2O = a beta-D-galactosyl-(1-&gt;4)-beta-D-glucosyl-(1&lt;-&gt;1)-ceramide + N-acetylneuraminate. The catalysed reaction is a ganglioside GM1 + H2O = a ganglioside GA1 + N-acetylneuraminate. It carries out the reaction a ganglioside GM1 (d18:1(4E)) + H2O = a ganglioside GA1 (d18:1(4E)) + N-acetylneuraminate. It catalyses the reaction a ganglioside GM2 (d18:1(4E)) + H2O = a ganglioside GA2 (d18:1(4E)) + N-acetylneuraminate. The enzyme catalyses a ganglioside GM3 (d18:1(4E)) + H2O = a beta-D-Gal-(1-&gt;4)-beta-D-Glc-(1&lt;-&gt;1)-Cer(d18:1(4E)) + N-acetylneuraminate. The catalysed reaction is a ganglioside GT1b + H2O = a ganglioside GD1b + N-acetylneuraminate. Its function is as follows. Exo-alpha-sialidase that catalyzes the hydrolytic cleavage of the terminal sialic acid (N-acetylneuraminic acid, Neu5Ac) of a glycan moiety in the catabolism of glycolipids, glycoproteins and oligosacharides. Displays high catalytic efficiency for gangliosides including alpha-(2-&gt;3)-sialylated GD1a and GM3 and alpha-(2-&gt;8)-sialylated GD3. Plays a role in the regulation of transmembrane signaling through the modulation of ganglioside content of the lipid bilayer and by direct interaction with signaling receptors, such as EGFR. Desialylates EGFR and activates downstream signaling in proliferating cells. Contributes to clathrin-mediated endocytosis by regulating sorting of endocytosed receptors to early and recycling endosomes. The chain is Sialidase-3 (Neu3) from Mus musculus (Mouse).